Reading from the N-terminus, the 238-residue chain is Flagellar L-ring protein (238 aa).

An N-terminal signal peptide occupies residues 1–17 (MKRRLLAAGCAMLLLSG). The N-palmitoyl cysteine moiety is linked to residue Cys18. A lipid anchor (S-diacylglycerol cysteine) is attached at Cys18. Residues 22-50 (RQQPSPVPPVTQPQAYAEPEDTAANPGSL) are disordered.

This sequence belongs to the FlgH family. In terms of assembly, the basal body constitutes a major portion of the flagellar organelle and consists of four rings (L,P,S, and M) mounted on a central rod.

It localises to the cell outer membrane. The protein resides in the bacterial flagellum basal body. Functionally, assembles around the rod to form the L-ring and probably protects the motor/basal body from shearing forces during rotation. The polypeptide is Flagellar L-ring protein (Nitratidesulfovibrio vulgaris (strain DSM 19637 / Miyazaki F) (Desulfovibrio vulgaris)).